Consider the following 501-residue polypeptide: Phase 2 flagellin (501 aa).

Belongs to the bacterial flagellin family.

Its subcellular location is the secreted. The protein localises to the bacterial flagellum. Functionally, flagellin is the subunit protein which polymerizes to form the filaments of bacterial flagella. The sequence is that of Phase 2 flagellin (fljB) from Salmonella abortus-equi.